The sequence spans 190 residues: Cell division protein SepF (190 aa).

The protein belongs to the SepF family. In terms of assembly, homodimer. Interacts with FtsZ.

The protein localises to the cytoplasm. Cell division protein that is part of the divisome complex and is recruited early to the Z-ring. Probably stimulates Z-ring formation, perhaps through the cross-linking of FtsZ protofilaments. Its function overlaps with FtsA. The sequence is that of Cell division protein SepF from Synechococcus sp. (strain WH7803).